The chain runs to 211 residues: MIISRRQIRELAMQVLYAYEVRKEKVDKVAKGIIPEDVVADIKAKDFIFKIINSVIQNIQDIDTHIAKHADNWELNRMAIIDKNLMRIAIAEMLYLDDVPPKVSINEAIEIAKRYSTDKSSKFVNGILDATYNEVKSKGVLHKSGRGLVDLPAKKERVANPFPSTPPKKPENVPNPFSTPFKKNSSEPIRNPFEGNKSPQPPQKTLRRKKK.

The segment at Pro-152–Lys-211 is disordered. Polar residues predominate over residues Asn-175–Pro-188.

This sequence belongs to the NusB family.

Its function is as follows. Involved in transcription antitermination. Required for transcription of ribosomal RNA (rRNA) genes. Binds specifically to the boxA antiterminator sequence of the ribosomal RNA (rrn) operons. The sequence is that of Transcription antitermination protein NusB from Chloroherpeton thalassium (strain ATCC 35110 / GB-78).